The following is a 183-amino-acid chain: Ribulose bisphosphate carboxylase small subunit, chloroplastic (183 aa).

The N-terminal 59 residues, 1–59 (MASSMISSGTVATVSADRPAPAQARMVAPFTGLKSSSASPVTRKSNDITSIASNGGRVQ), are a transit peptide targeting the chloroplast.

Belongs to the RuBisCO small chain family. Heterohexadecamer of 8 large and 8 small subunits.

Its subcellular location is the plastid. The protein resides in the chloroplast. Functionally, ruBisCO catalyzes two reactions: the carboxylation of D-ribulose 1,5-bisphosphate, the primary event in carbon dioxide fixation, as well as the oxidative fragmentation of the pentose substrate. Both reactions occur simultaneously and in competition at the same active site. Although the small subunit is not catalytic it is essential for maximal activity. This is Ribulose bisphosphate carboxylase small subunit, chloroplastic from Malus sp. (Crab apple).